Consider the following 217-residue polypeptide: ATP synthase subunit 4, mitochondrial (217 aa).

Residues methionine 1–tyrosine 14 constitute a mitochondrion transit peptide. The next 2 helical transmembrane spans lie at glycine 41–valine 61 and isoleucine 66–tyrosine 86.

In terms of assembly, F-type ATP synthases have 2 components, the catalytic core F(1) and the membrane-embedded component F(0), linked together by a central stalk and a peripheral stalk. The central stalk, also called rotor shaft, is often seen as part of F(1). The peripheral stalk is seen as part of F(0). F(0) contains the membrane channel next to the rotor. F-type ATP synthases form dimers but each monomer functions independently in ATP generation. The dimer consists of 17 different polypeptides: ATP1 (subunit alpha, 3 molecules per monomer, part of F(1)), ATP2 (subunit beta, 3 copies per monomer, part of F(1)), ATP3 (subunit gamma, part of the central stalk), ATP4 (subunit b, part of the peripheral stalk), ATP5/OSCP (subunit 5/OSCP, part of the peripheral stalk), ATP6 (subunit a, part of the peripheral stalk), ATP7 (subunit d, part of the peripheral stalk), ATP8 (subunit 8, part of the peripheral stalk), OLI1 (subunit c, part of the rotor, 10 molecules per monomer), ATP14 (subunit h, part of the peripheral stalk), ATP15 (subunit epsilon, part of the central stalk), ATP16 (subunit delta, part of the central stalk), ATP17 (subunit f, part of the peripheral stalk), ATP18 (subunit i/j, part of the peripheral stalk), ATP19 (subunit k, dimer-specific, at interface between monomers), ATP20 (subunit g, at interface between monomers), TIM11 (subunit e, at interface between monomers).

It is found in the mitochondrion inner membrane. Functionally, mitochondrial membrane ATP synthase (F(1)F(0) ATP synthase or Complex V) produces ATP from ADP in the presence of a proton gradient across the membrane which is generated by electron transport complexes of the respiratory chain. F-type ATP synthases consist of two structural domains, F(1) - containing the extramembraneous catalytic core, and F(0) - containing the membrane proton channel, linked together by a central stalk and a peripheral stalk. During catalysis, ATP synthesis in the catalytic domain of F(1) is coupled via a rotary mechanism of the central stalk subunits to proton translocation. Part of the complex F(0) domain and the peripheral stalk, which acts as a stator to hold the catalytic alpha/ATP1(3)beta/ATP2(3) subcomplex and subunit a/ATP6 static relative to the rotary elements. This Yarrowia lipolytica (strain CLIB 122 / E 150) (Yeast) protein is ATP synthase subunit 4, mitochondrial.